The primary structure comprises 2262 residues: Protein Ycf2 (2262 aa).

Residue 1607-1614 coordinates ATP; the sequence is GFIGTGRS.

Belongs to the Ycf2 family.

It is found in the plastid. Its subcellular location is the chloroplast stroma. Functionally, probable ATPase of unknown function. Its presence in a non-photosynthetic plant (Epifagus virginiana) and experiments in tobacco indicate that it has an essential function which is probably not related to photosynthesis. This is Protein Ycf2 from Nuphar advena (Common spatterdock).